Consider the following 92-residue polypeptide: uncharacterized protein (92 aa).

2 helical membrane passes run glycine 34–glycine 54 and leucine 65–valine 85.

Its subcellular location is the cell membrane. This is an uncharacterized protein from Bacillus anthracis.